Consider the following 94-residue polypeptide: Acylphosphatase (94 aa).

Residues 8 to 94 (RLTAWVHGRV…REQITGFHER (87 aa)) enclose the Acylphosphatase-like domain. Active-site residues include Arg23 and Asn41.

The protein belongs to the acylphosphatase family.

The catalysed reaction is an acyl phosphate + H2O = a carboxylate + phosphate + H(+). The chain is Acylphosphatase (acyP) from Mycobacterium sp. (strain KMS).